Consider the following 155-residue polypeptide: Transcriptional repressor NrdR (155 aa).

A zinc finger lies at 3 to 34; it reads CPFCAANDTKVIDSRLVAEGDQVRRRRECVAC. Positions 49-139 constitute an ATP-cone domain; sequence PRLIKQDGSR…VYRRFQDLNE (91 aa).

The protein belongs to the NrdR family. Zn(2+) is required as a cofactor.

Negatively regulates transcription of bacterial ribonucleotide reductase nrd genes and operons by binding to NrdR-boxes. In Ectopseudomonas mendocina (strain ymp) (Pseudomonas mendocina), this protein is Transcriptional repressor NrdR.